The chain runs to 657 residues: Polycomb protein suz12-A (657 aa).

A disordered region spans residues 335–363; that stretch reads TAPVAKPLATRNSESSTVDSSKTSNIKPP. A compositionally biased stretch (low complexity) spans 347 to 358; the sequence is SESSTVDSSKTS. Residues 413–436 form a C2H2-type zinc finger; that stretch reads LHCPWCTLNCRKLYSLLKHLKLSH. Positions 528 to 604 are VEFS-box; it reads RLYFHSDSCT…NQMNQACMSF (77 aa).

It belongs to the VEFS (VRN2-EMF2-FIS2-SU(Z)12) family. As to quaternary structure, component of the prc2/eed-ezh2 complex.

It is found in the nucleus. Its function is as follows. Polycomb group (PcG) protein. Component of the prc2/eed-ezh2 complex, which methylates 'Lys-9' and 'Lys-27' of histone H3, leading to transcriptional repression of the affected target gene. The sequence is that of Polycomb protein suz12-A (suz12a) from Danio rerio (Zebrafish).